Consider the following 393-residue polypeptide: Putative serpin-Z6A (393 aa).

Residues 336–360 (GTEAAAATAVLMEGAARYAPPPPPR) are RCL.

It belongs to the serpin family.

In terms of biological role, probable serine protease inhibitor. The chain is Putative serpin-Z6A from Oryza sativa subsp. japonica (Rice).